The sequence spans 113 residues: U11-theraphotoxin-Hhn1a (113 aa).

A signal peptide spans 1-21; sequence MNTVRVTFLLVFVLAVSLGQA. A propeptide spanning residues 22–74 is cleaved from the precursor; it reads DKDENRMEMQEKTEQGKSYLDFAENLLLQKLEELEAKLPEEDSEESRNSRQKR. Positions 58–69 are enriched in basic and acidic residues; it reads KLPEEDSEESRN. A disordered region spans residues 58–82; it reads KLPEEDSEESRNSRQKRCIGEGVPC. 3 disulfide bridges follow: C75/C90, C82/C95, and C89/C110.

The protein belongs to the neurotoxin 14 (magi-1) family. 01 (HNTX-16) subfamily. In terms of tissue distribution, expressed by the venom gland.

It localises to the secreted. Functionally, probable ion channel inhibitor. The chain is U11-theraphotoxin-Hhn1a from Cyriopagopus hainanus (Chinese bird spider).